The primary structure comprises 383 residues: Transposase InsI for insertion sequence element IS30A (383 aa).

The 167-residue stretch at 213-379 (VNGTPIHERS…TPKEIIERGV (167 aa)) folds into the Integrase catalytic domain.

Belongs to the transposase IS30 family.

Required for the transposition of the insertion element. The polypeptide is Transposase InsI for insertion sequence element IS30A (insI1) (Escherichia coli (strain K12)).